A 784-amino-acid polypeptide reads, in one-letter code: E3 UFM1-protein ligase 1 homolog (784 aa).

The tract at residues 401 to 481 is disordered; that stretch reads QKGNSSAQDL…GGGGGGNKKT (81 aa).

Belongs to the UFL1 family.

In terms of biological role, E3 UFM1-protein ligase that mediates ufmylation of target proteins. This is E3 UFM1-protein ligase 1 homolog from Drosophila ananassae (Fruit fly).